Reading from the N-terminus, the 160-residue chain is Endoribonuclease YbeY (160 aa).

Positions 124, 128, and 134 each coordinate Zn(2+).

Belongs to the endoribonuclease YbeY family. The cofactor is Zn(2+).

The protein resides in the cytoplasm. In terms of biological role, single strand-specific metallo-endoribonuclease involved in late-stage 70S ribosome quality control and in maturation of the 3' terminus of the 16S rRNA. The sequence is that of Endoribonuclease YbeY from Jannaschia sp. (strain CCS1).